Consider the following 347-residue polypeptide: NADH-ubiquinone oxidoreductase chain 2 (347 aa).

9 helical membrane passes run P3–S23, Y59–M79, V93–V115, N150–L170, I178–P198, L200–A220, M240–F260, N274–T294, and L326–L346.

It belongs to the complex I subunit 2 family. Core subunit of respiratory chain NADH dehydrogenase (Complex I) which is composed of 45 different subunits. Interacts with TMEM242.

The protein localises to the mitochondrion inner membrane. The enzyme catalyses a ubiquinone + NADH + 5 H(+)(in) = a ubiquinol + NAD(+) + 4 H(+)(out). In terms of biological role, core subunit of the mitochondrial membrane respiratory chain NADH dehydrogenase (Complex I) which catalyzes electron transfer from NADH through the respiratory chain, using ubiquinone as an electron acceptor. Essential for the catalytic activity and assembly of complex I. The sequence is that of NADH-ubiquinone oxidoreductase chain 2 from Elephas maximus (Indian elephant).